We begin with the raw amino-acid sequence, 265 residues long: Uroporphyrinogen-III synthase (265 aa).

This sequence belongs to the uroporphyrinogen-III synthase family. In terms of assembly, monomer.

It localises to the cytoplasm. Its subcellular location is the cytosol. It catalyses the reaction hydroxymethylbilane = uroporphyrinogen III + H2O. The protein operates within porphyrin-containing compound metabolism; protoporphyrin-IX biosynthesis; coproporphyrinogen-III from 5-aminolevulinate: step 3/4. Functionally, catalyzes cyclization of the linear tetrapyrrole, hydroxymethylbilane, to the macrocyclic uroporphyrinogen III, the branch point for the various sub-pathways leading to the wide diversity of porphyrins. Porphyrins act as cofactors for a multitude of enzymes that perform a variety of processes within the cell such as methionine synthesis (vitamin B12) or oxygen transport (heme). The sequence is that of Uroporphyrinogen-III synthase (Uros) from Mus musculus (Mouse).